The sequence spans 152 residues: MALKIVIGGDNAGFNYKEALRKDLEADDRVASVEDVGVGGVDDTTSYPNVAVAAAEKVARGEADRALLICGTGLGVAIAANKVKGIRAVTAHDVYSVQRSVLSNNAQVLCMGERVVGLELARALVKEWLGLEFDPQSASAAKVNDICAYEGA.

Catalysis depends on C70, which acts as the Proton acceptor.

This sequence belongs to the LacAB/RpiB family.

The catalysed reaction is D-erythrulose 4-phosphate = D-erythrose 4-phosphate. It functions in the pathway carbohydrate metabolism; erythritol degradation. It participates in carbohydrate metabolism; D-threitol degradation. Its pathway is carbohydrate metabolism; L-threitol degradation. Functionally, catalyzes the isomerization of D-erythrulose-4P to D-erythrose-4P. Involved in the degradation pathways of L-threitol, D-threitol and erythritol, that allow M.smegmatis to grow on these compounds as the sole carbon source. In Mycolicibacterium smegmatis (strain ATCC 700084 / mc(2)155) (Mycobacterium smegmatis), this protein is D-erythrulose-4-phosphate isomerase 2.